We begin with the raw amino-acid sequence, 169 residues long: Peptide methionine sulfoxide reductase MsrA (169 aa).

C10 is an active-site residue.

It belongs to the MsrA Met sulfoxide reductase family.

It carries out the reaction L-methionyl-[protein] + [thioredoxin]-disulfide + H2O = L-methionyl-(S)-S-oxide-[protein] + [thioredoxin]-dithiol. It catalyses the reaction [thioredoxin]-disulfide + L-methionine + H2O = L-methionine (S)-S-oxide + [thioredoxin]-dithiol. Its function is as follows. Has an important function as a repair enzyme for proteins that have been inactivated by oxidation. Catalyzes the reversible oxidation-reduction of methionine sulfoxide in proteins to methionine. The sequence is that of Peptide methionine sulfoxide reductase MsrA from Streptococcus pyogenes serotype M28 (strain MGAS6180).